A 195-amino-acid polypeptide reads, in one-letter code: Chromophore lyase CpcT/CpeT 2 (195 aa).

The protein belongs to the CpcT/CpeT biliprotein lyase family.

Covalently attaches a chromophore to Cys residue(s) of phycobiliproteins. The protein is Chromophore lyase CpcT/CpeT 2 of Trichodesmium erythraeum (strain IMS101).